A 99-amino-acid polypeptide reads, in one-letter code: Aspartyl/glutamyl-tRNA(Asn/Gln) amidotransferase subunit C (99 aa).

Belongs to the GatC family. Heterotrimer of A, B and C subunits.

It carries out the reaction L-glutamyl-tRNA(Gln) + L-glutamine + ATP + H2O = L-glutaminyl-tRNA(Gln) + L-glutamate + ADP + phosphate + H(+). It catalyses the reaction L-aspartyl-tRNA(Asn) + L-glutamine + ATP + H2O = L-asparaginyl-tRNA(Asn) + L-glutamate + ADP + phosphate + 2 H(+). Functionally, allows the formation of correctly charged Asn-tRNA(Asn) or Gln-tRNA(Gln) through the transamidation of misacylated Asp-tRNA(Asn) or Glu-tRNA(Gln) in organisms which lack either or both of asparaginyl-tRNA or glutaminyl-tRNA synthetases. The reaction takes place in the presence of glutamine and ATP through an activated phospho-Asp-tRNA(Asn) or phospho-Glu-tRNA(Gln). This is Aspartyl/glutamyl-tRNA(Asn/Gln) amidotransferase subunit C from Rhodococcus erythropolis (strain PR4 / NBRC 100887).